We begin with the raw amino-acid sequence, 851 residues long: Envelope glycoprotein gp160 (851 aa).

The first 24 residues, 1 to 24 (MEPGRNQLLVAILLTSACLIYCKQ), serve as a signal peptide directing secretion. The Extracellular portion of the chain corresponds to 25-669 (YVTVFYGIPA…LTSWIKYIQY (645 aa)). Asn37 carries N-linked (GlcNAc...) asparagine; by host glycosylation. The cysteines at positions 44 and 57 are disulfide-linked. Asn70, Asn114, Asn127, Asn134, Asn142, Asn157, Asn184, Asn195, Asn227, Asn230, Asn261, Asn267, Asn278, Asn289, Asn299, Asn355, Asn361, Asn388, Asn398, Asn401, Asn438, Asn453, and Asn456 each carry an N-linked (GlcNAc...) asparagine; by host glycan. 5 disulfides stabilise this stretch: Cys101/Cys203, Cys108/Cys194, Cys113/Cys154, Cys216/Cys246, and Cys226/Cys238. Residues 113–153 (CNITSGTTATPSPPNITIIDENSTCIGDNNCTGLGKEEVVE) are V1. Residues 154 to 194 (CEFNMTGLEQDKKRKYNDAWYSRDVVCDKTNGTGTCYMRHC) are V2. A V3 region spans residues 294 to 327 (CKRPGNKTVVPITLMSGRRFHSRPVYNKKPGQAW). Cys294 and Cys328 are oxidised to a cystine. 2 disulfide bridges follow: Cys380–Cys437 and Cys387–Cys410. The interval 387–410 (CNMTWFLNWVENKTNQTHGNYAPC) is V4. Residues 453 to 459 (NQTNITF) form a V5 region. The fusion peptide stretch occupies residues 502-522 (GVFVLGFLGFLATAGSAMGGA). The interval 565 to 581 (LQARVTAIEKYLKDQAQ) is immunosuppression. N-linked (GlcNAc...) asparagine; by host glycosylation is found at Asn601, Asn610, and Asn626. The segment at 647 to 668 (KLNSWDVFGNWFDLTSWIKYIQ) is MPER; binding to GalCer. Residues 670-690 (GVYIVVGIIGLRIAIYIVQLL) form a helical membrane-spanning segment. The Cytoplasmic segment spans residues 691–851 (SRLRKGYRPV…IRQGAEIALL (161 aa)). Residues 697-700 (YRPV) carry the YXXV motif; contains endocytosis signal motif. Cys763 is lipidated: S-palmitoyl cysteine; by host. Positions 850 to 851 (LL) match the Di-leucine internalization motif motif.

In terms of assembly, the mature envelope protein (Env) consists of a homotrimer of non-covalently associated gp120-gp41 heterodimers. The resulting complex protrudes from the virus surface as a spike. There seems to be as few as 10 spikes on the average virion. Interacts with human CD4, CCR5 and CXCR4, to form a P4HB/PDI-CD4-CXCR4-gp120 complex. Gp120 also interacts with the C-type lectins CD209/DC-SIGN and CLEC4M/DC-SIGNR (collectively referred to as DC-SIGN(R)). Gp120 and gp41 interact with GalCer. As to quaternary structure, the mature envelope protein (Env) consists of a homotrimer of non-covalently associated gp120-gp41 heterodimers. The resulting complex protrudes from the virus surface as a spike. There seems to be as few as 10 spikes on the average virion. In terms of processing, specific enzymatic cleavages in vivo yield mature proteins. Envelope glycoproteins are synthesized as an inactive precursor that is heavily N-glycosylated and processed likely by host cell furin in the Golgi to yield the mature SU and TM proteins. The cleavage site between SU and TM requires the minimal sequence [KR]-X-[KR]-R. Post-translationally, palmitoylation of the transmembrane protein and of Env polyprotein (prior to its proteolytic cleavage) is essential for their association with host cell membrane lipid rafts. Palmitoylation is therefore required for envelope trafficking to classical lipid rafts, but not for viral replication.

The protein resides in the virion membrane. Its subcellular location is the host cell membrane. It localises to the host endosome membrane. The surface protein gp120 (SU) attaches the virus to the host lymphoid cell by binding to the primary receptor CD4. This interaction induces a structural rearrangement creating a high affinity binding site for a chemokine coreceptor like CXCR4 and/or CCR5. This peculiar 2 stage receptor-interaction strategy allows gp120 to maintain the highly conserved coreceptor-binding site in a cryptic conformation, protected from neutralizing antibodies. Since CD4 also displays a binding site for the disulfide-isomerase P4HB/PDI, a P4HB/PDI-CD4-CXCR4-gp120 complex may form. In that complex, P4HB/PDI could reach and reduce gp120 disulfide bonds, causing major conformational changes in gp120. TXN, another PDI family member could also be involved in disulfide rearrangements in Env during fusion. These changes are transmitted to the transmembrane protein gp41 and are thought to activate its fusogenic potential by unmasking its fusion peptide. Its function is as follows. The surface protein gp120 is a ligand for CD209/DC-SIGN and CLEC4M/DC-SIGNR, which are respectively found on dendritic cells (DCs), and on endothelial cells of liver sinusoids and lymph node sinuses. These interactions allow capture of viral particles at mucosal surfaces by these cells and subsequent transmission to permissive cells. DCs are professional antigen presenting cells, critical for host immunity by inducing specific immune responses against a broad variety of pathogens. They act as sentinels in various tissues where they take up antigen, process it, and present it to T-cells following migration to lymphoid organs. HIV subverts the migration properties of dendritic cells to gain access to CD4+ T-cells in lymph nodes. Virus transmission to permissive T-cells occurs either in trans (without DCs infection, through viral capture and transmission), or in cis (following DCs productive infection, through the usual CD4-gp120 interaction), thereby inducing a robust infection. In trans infection, bound virions remain infectious over days and it is proposed that they are not degraded, but protected in non-lysosomal acidic organelles within the DCs close to the cell membrane thus contributing to the viral infectious potential during DCs' migration from the periphery to the lymphoid tissues. On arrival at lymphoid tissues, intact virions recycle back to DCs' cell surface allowing virus transmission to CD4+ T-cells. Virion capture also seems to lead to MHC-II-restricted viral antigen presentation, and probably to the activation of HIV-specific CD4+ cells. In terms of biological role, the transmembrane protein gp41 (TM) acts as a class I viral fusion protein. Under the current model, the protein has at least 3 conformational states: pre-fusion native state, pre-hairpin intermediate state, and post-fusion hairpin state. During fusion of viral and target intracellular membranes, the coiled coil regions (heptad repeats) assume a trimer-of-hairpins structure, positioning the fusion peptide in close proximity to the C-terminal region of the ectodomain. The formation of this structure appears to drive apposition and subsequent fusion of viral and target cell membranes. Complete fusion occurs in host cell endosomes and is dynamin-dependent, however some lipid transfer might occur at the plasma membrane. The virus undergoes clathrin-dependent internalization long before endosomal fusion, thus minimizing the surface exposure of conserved viral epitopes during fusion and reducing the efficacy of inhibitors targeting these epitopes. Membranes fusion leads to delivery of the nucleocapsid into the cytoplasm. Functionally, the envelope glycoprotein gp160 precursor down-modulates cell surface CD4 antigen by interacting with it in the endoplasmic reticulum and blocking its transport to the cell surface. The gp120-gp41 heterodimer seems to contribute to T-cell depletion during HIV-1 infection. The envelope glycoproteins expressed on the surface of infected cells induce apoptosis through an interaction with uninfected cells expressing the receptor (CD4) and the coreceptors CXCR4 or CCR5. This type of bystander killing may be obtained by at least three distinct mechanisms. First, the interaction between the 2 cells can induce cellular fusion followed by nuclear fusion within the syncytium. Syncytia are condemned to die from apoptosis. Second, the 2 interacting cells may not fuse entirely and simply exchange plasma membrane lipids, after a sort of hemifusion process, followed by rapid death. Third, it is possible that virus-infected cells, on the point of undergoing apoptosis, fuse with CD4-expressing cells, in which case apoptosis is rapidly transmitted from one cell to the other and thus occurs in a sort of contagious fashion. Its function is as follows. The gp120-gp41 heterodimer allows rapid transcytosis of the virus through CD4 negative cells such as simple epithelial monolayers of the intestinal, rectal and endocervical epithelial barriers. Both gp120 and gp41 specifically recognize glycosphingolipids galactosyl-ceramide (GalCer) or 3' sulfo-galactosyl-ceramide (GalS) present in the lipid rafts structures of epithelial cells. Binding to these alternative receptors allows the rapid transcytosis of the virus through the epithelial cells. This transcytotic vesicle-mediated transport of virions from the apical side to the basolateral side of the epithelial cells does not involve infection of the cells themselves. This chain is Envelope glycoprotein gp160 (env), found in Human immunodeficiency virus type 2 subtype A (isolate D194) (HIV-2).